A 360-amino-acid chain; its full sequence is Peptide chain release factor 1 (360 aa).

N5-methylglutamine is present on Q235. The span at 285-295 (RQAAEQTDMRR) shows a compositional bias: basic and acidic residues. Positions 285–309 (RQAAEQTDMRRNLLGSGDRSDKIRT) are disordered.

Belongs to the prokaryotic/mitochondrial release factor family. Methylated by PrmC. Methylation increases the termination efficiency of RF1.

It localises to the cytoplasm. Its function is as follows. Peptide chain release factor 1 directs the termination of translation in response to the peptide chain termination codons UAG and UAA. This chain is Peptide chain release factor 1 (prfA), found in Haemophilus influenzae (strain ATCC 51907 / DSM 11121 / KW20 / Rd).